We begin with the raw amino-acid sequence, 521 residues long: Occludin (521 aa).

Positions 1 to 20 are disordered; sequence MSVRPFESPPPYRPDEFKPN. The Cytoplasmic segment spans residues 1–66; the sequence is MSVRPFESPP…KWTSPPGVIR (66 aa). Residues 60–267 enclose the MARVEL domain; the sequence is SPPGVIRILS…IIFFAVKTRR (208 aa). Residues 67 to 89 form a helical membrane-spanning segment; the sequence is ILSMLIIVMCIAIFACVASTLAW. At 90 to 133 the chain is on the extracellular side; sequence DRGYGTGLFGGSLNYPYSGFGYGGGYGGGYGGYGYGYGGYTDPR. A helical transmembrane segment spans residues 134–158; the sequence is AAKGFLLAMAAFCFIASLVIFVTSV. At 159 to 168 the chain is on the cytoplasmic side; sequence IRSGMSRTRR. The chain crosses the membrane as a helical span at residues 169 to 193; that stretch reads YYLIVIIVSAILGIMVFIATIVYIM. The Extracellular portion of the chain corresponds to 194–241; the sequence is GVNPTAQASGSMYGSQIYMICNQFYTPGGTGLYVDQYLYHYCVVDPQE. An intrachain disulfide couples cysteine 214 to cysteine 235. The helical transmembrane segment at 242–263 threads the bilayer; it reads AIAIVLGFMIIVAFALIIFFAV. Topologically, residues 264-521 are cytoplasmic; that stretch reads KTRRKMDRYD…MVGDYDRRKP (258 aa). Residue serine 300 is modified to Phosphoserine. The disordered stretch occupies residues 300–329; the sequence is SAGTQDMPPPPSDYAERVDSPMAYSSNGKV. A Phosphothreonine modification is found at threonine 303. A phosphoserine mark is found at serine 311 and serine 319. A Phosphoserine; by PKC; in vitro modification is found at serine 338. The residue at position 358 (serine 358) is a Phosphoserine. The interval 361–405 is disordered; it reads DFRQPRYSSNGNLETPSKRAPTKGKAGKGKRTDPDHYETDYTTGG. Residues 366–375 are compositionally biased toward polar residues; that stretch reads RYSSNGNLET. Tyrosine 367 is subject to Phosphotyrosine. A phosphoserine mark is found at serine 368 and serine 369. Over residues 380–389 the composition is skewed to basic residues; it reads APTKGKAGKG. Residues 390-399 are compositionally biased toward basic and acidic residues; the sequence is KRTDPDHYET. Phosphotyrosine is present on residues tyrosine 397 and tyrosine 401. Position 402 is a phosphothreonine; by PKC/PRKCH (threonine 402). At threonine 403 the chain carries Phosphothreonine. Residue serine 407 is modified to Phosphoserine. The OCEL domain occupies 413–521; the sequence is EDWVREYPPI…MVGDYDRRKP (109 aa). The stretch at 424 to 488 forms a coiled coil; sequence SDQQRQLYKR…EYNRLKQVKG (65 aa). Phosphoserine is present on serine 489.

The protein belongs to the ELL/occludin family. Interacts with TJP1/ZO1. Interacts with VAPA. Interacts with CLDN1, CLDN6, CLDN9, CLDN11, CLDN12 and CLDN17. Interacts with PLSCR1. Interacts with LSR, ILDR1 and ILDR2. Interacts with TJP2/ZO2. Post-translationally, dephosphorylated by PTPRJ. May be phosphorylated by PKC during translocation to cell-cell contacts. In terms of tissue distribution, localized at tight junctions of both epithelial and endothelial cells. Highly expressed in the testis, kidney, lung, liver and brain. Not detected in skeletal muscle, spleen and heart.

It is found in the cell membrane. The protein localises to the cell junction. It localises to the tight junction. In terms of biological role, may play a role in the formation and regulation of the tight junction (TJ) paracellular permeability barrier. This is Occludin (Ocln) from Mus musculus (Mouse).